Reading from the N-terminus, the 453-residue chain is Homogentisate 1,2-dioxygenase (453 aa).

H306 functions as the Proton acceptor in the catalytic mechanism. 2 residues coordinate Fe cation: H349 and E355. Residues Y364 and H385 each coordinate homogentisate. Position 385 (H385) interacts with Fe cation.

This sequence belongs to the homogentisate dioxygenase family. In terms of assembly, hexamer; dimer of trimers. It depends on Fe cation as a cofactor.

The enzyme catalyses homogentisate + O2 = 4-maleylacetoacetate + H(+). The protein operates within amino-acid degradation; L-phenylalanine degradation; acetoacetate and fumarate from L-phenylalanine: step 4/6. Functionally, involved in the catabolism of homogentisate (2,5-dihydroxyphenylacetate or 2,5-OH-PhAc), a central intermediate in the degradation of phenylalanine and tyrosine. Catalyzes the oxidative ring cleavage of the aromatic ring of homogentisate to yield maleylacetoacetate. The sequence is that of Homogentisate 1,2-dioxygenase from Rhizobium etli (strain ATCC 51251 / DSM 11541 / JCM 21823 / NBRC 15573 / CFN 42).